We begin with the raw amino-acid sequence, 333 residues long: Trans-enoyl reductase apdC (333 aa).

45 to 48 (FDAK) provides a ligand contact to NADP(+). 131–138 (VGLATVGM) is a substrate binding site. NADP(+) contacts are provided by residues 167-170 (SPHN), Y185, and 232-233 (LD). Residue 252 to 256 (SVTMY) coordinates substrate. 321–322 (VS) serves as a coordination point for NADP(+).

This sequence belongs to the zinc-containing alcohol dehydrogenase family. Monomer.

It functions in the pathway secondary metabolite biosynthesis. Its function is as follows. Trans-enoyl reductase; part of the gene cluster that mediates the biosynthesis of aspyridones. The polyketide-amino acid backbone preaspyridone A is first assembled by the PKS-NRPS hybrid apdA. The assembly of preaspyridone A is initiated by loading of malonyl-CoA onto apdA, followed by decarboxylation to yield the acetyl starter unit. The growing polyketide chain then elongates into a tetraketide. The adpA PKS module catalyzes three Claisen condensations, as well as beta-keto processing and methylation. Alpha-methylation step during polyketide synthesis is a prerequisite and a key checkpoint for chain transfer between PKS and NRPS modules. The downstream NRPS module contains the condensation (C), adenylation (A), and thiolation (T) domains and catalyzes the incorporation of tyrosine via the formation of the L-tyrosinyl-thioester and the amide linkage between L-tyrosinyl-thioester and the tetraketide. The bimodular assembly line is terminated with a reductase (R) domain that facilitates formation and release of the tetramic acid product. Because apdA lacks a designated enoylreductase (ER) domain, the required activity is provided the enoyl reductase apdC. ApdC appears to operate with different stereoselectivity in different PKS cycle. Combined with apdC, apdA is proposed to synthesize preaspyridone A via about 20 enzymatic steps. A number of oxidative steps performed successively by the cytochrome P450 monooxygenases apdE and apdB are required for the conversion of preaspyridone A to aspyridone A. The cytochrome P450 monooxygenase apdE is responsible for the oxidative dephenylation of preaspyridone A. Finally, the predicted FAD-dependent monooxygenase apdD and the acyl-CoA dehydrogenase apdG may be involved in the transformation of aspyridone A into aspyridone B. The chain is Trans-enoyl reductase apdC from Emericella nidulans (strain FGSC A4 / ATCC 38163 / CBS 112.46 / NRRL 194 / M139) (Aspergillus nidulans).